Here is a 155-residue protein sequence, read N- to C-terminus: Glutamyl-tRNA(Gln) amidotransferase subunit C, chloroplastic/mitochondrial (155 aa).

The transit peptide at 1-52 directs the protein to the chloroplast and mitochondrion; the sequence is MATRALLAVIYASPNRCYISPSRIKIQSLTCSSSSHYYQRQSRKNHRIARSY.

It belongs to the GatC family. In terms of assembly, subunit of the heterotrimeric GatCAB amidotransferase (AdT) complex, composed of A, B and C subunits.

The protein localises to the mitochondrion. Its subcellular location is the plastid. It is found in the chloroplast. It carries out the reaction L-glutamyl-tRNA(Gln) + L-glutamine + ATP + H2O = L-glutaminyl-tRNA(Gln) + L-glutamate + ADP + phosphate + H(+). Its function is as follows. Allows the formation of correctly charged Gln-tRNA(Gln) through the transamidation of misacylated Glu-tRNA(Gln) in chloroplasts and mitochondria. The reaction takes place in the presence of glutamine and ATP through an activated gamma-phospho-Glu-tRNA(Gln). The protein is Glutamyl-tRNA(Gln) amidotransferase subunit C, chloroplastic/mitochondrial of Arabidopsis thaliana (Mouse-ear cress).